Here is a 429-residue protein sequence, read N- to C-terminus: Histidine--tRNA ligase (429 aa).

The protein belongs to the class-II aminoacyl-tRNA synthetase family. Homodimer.

It is found in the cytoplasm. The enzyme catalyses tRNA(His) + L-histidine + ATP = L-histidyl-tRNA(His) + AMP + diphosphate + H(+). This is Histidine--tRNA ligase from Pseudomonas paraeruginosa (strain DSM 24068 / PA7) (Pseudomonas aeruginosa (strain PA7)).